The sequence spans 378 residues: Probable endopolygalacturonase AFUB_016610 (378 aa).

The first 19 residues, 1–19 (MLKLMGSLVLLASAAEVIA), serve as a signal peptide directing secretion. A propeptide spanning residues 20-35 (SPAAEPVAPSTTLEKR) is cleaved from the precursor. A disulfide bridge links Cys-38 with Cys-56. PbH1 repeat units follow at residues 147-169 (TSSS…SING), 170-200 (CDGL…DIGS), and 201-222 (SSNI…AVNS). Asp-215 acts as the Proton donor in catalysis. A disulfide bridge links Cys-217 with Cys-233. The active site involves His-237. 2 PbH1 repeats span residues 252–273 (VENV…RIKA) and 281–303 (IKGV…LIEQ). N-linked (GlcNAc...) asparagine glycosylation occurs at Asn-254. A glycan (N-linked (GlcNAc...) asparagine) is linked at Asn-327. An intrachain disulfide couples Cys-345 to Cys-350. Asn-352 carries N-linked (GlcNAc...) asparagine glycosylation. Cysteines 369 and 378 form a disulfide.

The protein belongs to the glycosyl hydrolase 28 family.

It localises to the secreted. It carries out the reaction (1,4-alpha-D-galacturonosyl)n+m + H2O = (1,4-alpha-D-galacturonosyl)n + (1,4-alpha-D-galacturonosyl)m.. In terms of biological role, involved in maceration and soft-rotting of plant tissue. Hydrolyzes the 1,4-alpha glycosidic bonds of de-esterified pectate in the smooth region of the plant cell wall. In Aspergillus fumigatus (strain CBS 144.89 / FGSC A1163 / CEA10) (Neosartorya fumigata), this protein is Probable endopolygalacturonase AFUB_016610.